We begin with the raw amino-acid sequence, 382 residues long: ATP phosphoribosyltransferase regulatory subunit (382 aa).

This sequence belongs to the class-II aminoacyl-tRNA synthetase family. HisZ subfamily. Heteromultimer composed of HisG and HisZ subunits.

It is found in the cytoplasm. The protein operates within amino-acid biosynthesis; L-histidine biosynthesis; L-histidine from 5-phospho-alpha-D-ribose 1-diphosphate: step 1/9. In terms of biological role, required for the first step of histidine biosynthesis. May allow the feedback regulation of ATP phosphoribosyltransferase activity by histidine. The chain is ATP phosphoribosyltransferase regulatory subunit from Burkholderia pseudomallei (strain 668).